The primary structure comprises 133 residues: Nickel-responsive regulator (133 aa).

4 residues coordinate Ni(2+): His-76, His-87, His-89, and Cys-95.

Belongs to the transcriptional regulatory CopG/NikR family. As to quaternary structure, homotetramer. Ni(2+) serves as cofactor.

Transcriptional repressor of the nikABCDE operon. Is active in the presence of excessive concentrations of intracellular nickel. The protein is Nickel-responsive regulator of Escherichia coli (strain SE11).